A 234-amino-acid chain; its full sequence is Purine nucleoside phosphorylase DeoD-type (234 aa).

His-4 serves as a coordination point for a purine D-ribonucleoside. Residues Gly-20, Arg-24, Arg-43, and 87 to 90 (RVGT) contribute to the phosphate site. A purine D-ribonucleoside is bound by residues 179–181 (EME) and 203–204 (SN).

Belongs to the PNP/UDP phosphorylase family. In terms of assembly, homohexamer; trimer of homodimers.

The enzyme catalyses a purine D-ribonucleoside + phosphate = a purine nucleobase + alpha-D-ribose 1-phosphate. It catalyses the reaction a purine 2'-deoxy-D-ribonucleoside + phosphate = a purine nucleobase + 2-deoxy-alpha-D-ribose 1-phosphate. Catalyzes the reversible phosphorolytic breakdown of the N-glycosidic bond in the beta-(deoxy)ribonucleoside molecules, with the formation of the corresponding free purine bases and pentose-1-phosphate. This is Purine nucleoside phosphorylase DeoD-type from Latilactobacillus sakei subsp. sakei (strain 23K) (Lactobacillus sakei subsp. sakei).